The primary structure comprises 219 residues: Ribose-5-phosphate isomerase A (219 aa).

Substrate-binding positions include 28–31 (TGST), 81–84 (DGAD), and 94–97 (KGGG). Glu103 (proton acceptor) is an active-site residue. Lys121 provides a ligand contact to substrate.

Belongs to the ribose 5-phosphate isomerase family. As to quaternary structure, homodimer.

The catalysed reaction is aldehydo-D-ribose 5-phosphate = D-ribulose 5-phosphate. The protein operates within carbohydrate degradation; pentose phosphate pathway; D-ribose 5-phosphate from D-ribulose 5-phosphate (non-oxidative stage): step 1/1. Catalyzes the reversible conversion of ribose-5-phosphate to ribulose 5-phosphate. The protein is Ribose-5-phosphate isomerase A of Nitrosomonas europaea (strain ATCC 19718 / CIP 103999 / KCTC 2705 / NBRC 14298).